A 516-amino-acid polypeptide reads, in one-letter code: GMP synthase [glutamine-hydrolyzing] (516 aa).

Residues 7 to 203 (SVIVLDFGSQ…LIDIAGITPD (197 aa)) enclose the Glutamine amidotransferase type-1 domain. The active-site Nucleophile is C84. Catalysis depends on residues H177 and E179. One can recognise a GMPS ATP-PPase domain in the interval 204-391 (WSPKSFIQHQ…LGIAEDILMR (188 aa)). 231–237 (SGGVDST) provides a ligand contact to ATP.

In terms of assembly, homodimer.

It catalyses the reaction XMP + L-glutamine + ATP + H2O = GMP + L-glutamate + AMP + diphosphate + 2 H(+). It functions in the pathway purine metabolism; GMP biosynthesis; GMP from XMP (L-Gln route): step 1/1. Functionally, catalyzes the synthesis of GMP from XMP. This is GMP synthase [glutamine-hydrolyzing] from Chlorobaculum tepidum (strain ATCC 49652 / DSM 12025 / NBRC 103806 / TLS) (Chlorobium tepidum).